Reading from the N-terminus, the 193-residue chain is Interferon epsilon (193 aa).

Residues 1–21 (MINKSFFEIMLVLLASSTGFS) form the signal peptide. A disulfide bridge links Cys53 with Cys163. Asn139 carries an N-linked (GlcNAc...) asparagine glycan.

It belongs to the alpha/beta interferon family.

It is found in the secreted. In terms of biological role, type I interferon required for maintaining basal levels of IFN-regulated genes, including 2'-5'-oligoadenylate synthetase, IRF7 and ISG15, in the female reproductive tract. Directly mediates protection against viral and bacterial genital infections. This chain is Interferon epsilon (IFNE), found in Sus scrofa (Pig).